Here is a 123-residue protein sequence, read N- to C-terminus: Kininogen (123 aa).

Post-translationally, bradykinin is released from kininogen by kallikrein. N-glycosylated. Contains sulfated N-acetylglucosamine and O-acetylated sialic acids as terminal elements on biantennary and triantennary N-glycans.

Inhibits papain and ficin (cysteine proteinases) but not trypsin (a serine proteinase). This is Kininogen from Gadus morhua (Atlantic cod).